A 269-amino-acid polypeptide reads, in one-letter code: Small ribosomal subunit protein uS2 (269 aa).

The tract at residues 224–269 is disordered; sequence ANQGREDSEDVYSETENDTEETDEELVSEEDLKEFVENSEEESDEE. Over residues 230-269 the composition is skewed to acidic residues; the sequence is DSEDVYSETENDTEETDEELVSEEDLKEFVENSEEESDEE.

It belongs to the universal ribosomal protein uS2 family.

The polypeptide is Small ribosomal subunit protein uS2 (Finegoldia magna (strain ATCC 29328 / DSM 20472 / WAL 2508) (Peptostreptococcus magnus)).